We begin with the raw amino-acid sequence, 229 residues long: Orotate phosphoribosyltransferase (229 aa).

5-phospho-alpha-D-ribose 1-diphosphate contacts are provided by residues Arg107, Lys108, Lys111, His113, and 133-141 (EDLTTAGGS). Thr137 serves as a coordination point for orotate.

It belongs to the purine/pyrimidine phosphoribosyltransferase family. PyrE subfamily. As to quaternary structure, homodimer. Mg(2+) is required as a cofactor.

The catalysed reaction is orotidine 5'-phosphate + diphosphate = orotate + 5-phospho-alpha-D-ribose 1-diphosphate. It functions in the pathway pyrimidine metabolism; UMP biosynthesis via de novo pathway; UMP from orotate: step 1/2. In terms of biological role, catalyzes the transfer of a ribosyl phosphate group from 5-phosphoribose 1-diphosphate to orotate, leading to the formation of orotidine monophosphate (OMP). The sequence is that of Orotate phosphoribosyltransferase from Rhizobium johnstonii (strain DSM 114642 / LMG 32736 / 3841) (Rhizobium leguminosarum bv. viciae).